The following is a 328-amino-acid chain: Malate dehydrogenase (328 aa).

G11 to G17 lines the NAD(+) pocket. R92 and R98 together coordinate substrate. NAD(+) contacts are provided by residues N105, Q112, and V129–N131. Residues N131 and R162 each coordinate substrate. The active-site Proton acceptor is the H187.

The protein belongs to the LDH/MDH superfamily. MDH type 2 family.

The enzyme catalyses (S)-malate + NAD(+) = oxaloacetate + NADH + H(+). In terms of biological role, catalyzes the reversible oxidation of malate to oxaloacetate. The protein is Malate dehydrogenase of Coxiella burnetii (strain CbuG_Q212) (Coxiella burnetii (strain Q212)).